The sequence spans 1400 residues: DNA-directed RNA polymerase subunit beta' (1400 aa).

Residues C71, C73, C86, and C89 each contribute to the Zn(2+) site. D462, D464, and D466 together coordinate Mg(2+). C811, C885, C892, and C895 together coordinate Zn(2+).

Belongs to the RNA polymerase beta' chain family. The RNAP catalytic core consists of 2 alpha, 1 beta, 1 beta' and 1 omega subunit. When a sigma factor is associated with the core the holoenzyme is formed, which can initiate transcription. Requires Mg(2+) as cofactor. Zn(2+) is required as a cofactor.

The catalysed reaction is RNA(n) + a ribonucleoside 5'-triphosphate = RNA(n+1) + diphosphate. Its function is as follows. DNA-dependent RNA polymerase catalyzes the transcription of DNA into RNA using the four ribonucleoside triphosphates as substrates. The chain is DNA-directed RNA polymerase subunit beta' from Brucella abortus (strain S19).